The chain runs to 142 residues: MNSKHSYVELKDKVIVPGWPTLMLEIDFVGGTSRNQFLNIPFLSVKEPLQLPREKKLTDYFTIDVEPAGHSLVNIYFQIDDFLLLTLNSLSVYKDPIRKYMFLRLNKDQSKHAINAAFNVFSYRLRNIGVGPLGPDIRSSGP.

In terms of assembly, homooligomer. Forms homotetramers. Interacts with phosphoprotein P. Binds to ssRNA.

Its subcellular location is the virion. It is found in the host cytoplasm. The protein resides in the host cell membrane. It localises to the host nucleus. Its function is as follows. Plays a crucial role in virion assembly and budding. The chain is Matrix protein (M) from Borna disease virus (strain V) (BDV).